The following is a 139-amino-acid chain: Large ribosomal subunit protein uL16c (139 aa).

Belongs to the universal ribosomal protein uL16 family. As to quaternary structure, part of the 50S ribosomal subunit.

The protein resides in the plastid. It localises to the chloroplast. This chain is Large ribosomal subunit protein uL16c, found in Cryptomeria japonica (Japanese cedar).